Here is a 279-residue protein sequence, read N- to C-terminus: Thymidylate synthase (279 aa).

132 to 133 (RR) provides a ligand contact to dUMP. Cys-153 functions as the Nucleophile in the catalytic mechanism. Residues 178–181 (RSND), Asn-189, and 219–221 (HIY) contribute to the dUMP site. Position 181 (Asp-181) interacts with (6R)-5,10-methylene-5,6,7,8-tetrahydrofolate. (6R)-5,10-methylene-5,6,7,8-tetrahydrofolate is bound at residue Ala-278.

This sequence belongs to the thymidylate synthase family. Bacterial-type ThyA subfamily. In terms of assembly, homodimer.

It is found in the cytoplasm. The catalysed reaction is dUMP + (6R)-5,10-methylene-5,6,7,8-tetrahydrofolate = 7,8-dihydrofolate + dTMP. The protein operates within pyrimidine metabolism; dTTP biosynthesis. Its function is as follows. Catalyzes the reductive methylation of 2'-deoxyuridine-5'-monophosphate (dUMP) to 2'-deoxythymidine-5'-monophosphate (dTMP) while utilizing 5,10-methylenetetrahydrofolate (mTHF) as the methyl donor and reductant in the reaction, yielding dihydrofolate (DHF) as a by-product. This enzymatic reaction provides an intracellular de novo source of dTMP, an essential precursor for DNA biosynthesis. The protein is Thymidylate synthase of Lactococcus lactis subsp. cremoris (strain SK11).